The primary structure comprises 214 residues: Thymidylate kinase (214 aa).

Gly-12–Ser-19 provides a ligand contact to ATP.

Belongs to the thymidylate kinase family.

The catalysed reaction is dTMP + ATP = dTDP + ADP. In terms of biological role, phosphorylation of dTMP to form dTDP in both de novo and salvage pathways of dTTP synthesis. This is Thymidylate kinase from Bdellovibrio bacteriovorus (strain ATCC 15356 / DSM 50701 / NCIMB 9529 / HD100).